A 591-amino-acid chain; its full sequence is Heterogeneous nuclear ribonucleoprotein L-like (591 aa).

The segment at 1 to 120 is disordered; it reads MSSSSSSSPK…STEGGGSHHK (120 aa). Over residues 20-31 the composition is skewed to basic and acidic residues; it reads FESQAKRLKTEE. Lys28 participates in a covalent cross-link: Glycyl lysine isopeptide (Lys-Gly) (interchain with G-Cter in SUMO2). Residue Ser37 is modified to Phosphoserine. Thr48 bears the Phosphothreonine mark. Residues 57 to 73 are compositionally biased toward gly residues; sequence SGGGDGGDGDGGSGGGG. Residues 74 to 91 are compositionally biased toward acidic residues; it reads DGEEGEGGEEGDEGDGDE. Residues 92–105 show a composition bias toward gly residues; the sequence is GGSGGDEGGSGGGP. A phosphoserine mark is found at Ser107, Ser117, and Ser124. 3 consecutive RRM domains span residues 125 to 199, 215 to 293, and 384 to 458; these read PVVH…YSTS, NKVL…YARP, and SVVM…VSKQ. A Glycyl lysine isopeptide (Lys-Gly) (interchain with G-Cter in SUMO2) cross-link involves residue Lys540.

Interacts with HNRNPL.

RNA-binding protein that functions as a regulator of alternative splicing for multiple target mRNAs, including PTPRC/CD45 and STAT5A. Required for alternative splicing of PTPRC. In Mus musculus (Mouse), this protein is Heterogeneous nuclear ribonucleoprotein L-like (Hnrnpll).